A 304-amino-acid polypeptide reads, in one-letter code: Lipid droplet-associated triacylglycerol lipase (304 aa).

Over 1–155 (MTVKEYTKSK…MGIKMTAALR (155 aa)) the chain is Lumenal. A glycan (N-linked (GlcNAc...) asparagine) is linked at Asn95. The GXSXG motif lies at 107–111 (GHSVG). The active-site Nucleophile is Ser109. An intramembrane segment occupies 156–176 (YIPPLAHVVSLFSYIFFYWIL). The Lumenal segment spans residues 177–304 (SEGFSRFIID…HAEYAINAFF (128 aa)).

Belongs to the AB hydrolase superfamily. LDAH family.

It is found in the lipid droplet. It localises to the membrane. The enzyme catalyses a triacylglycerol + H2O = a diacylglycerol + a fatty acid + H(+). Shows both triacylglycerol (TAG) lipase and ester hydrolase activities. May play a role in TAG homeostasis. The polypeptide is Lipid droplet-associated triacylglycerol lipase (Saccharomyces cerevisiae (strain ATCC 204508 / S288c) (Baker's yeast)).